A 173-amino-acid polypeptide reads, in one-letter code: CDP-archaeol synthase (173 aa).

The next 5 membrane-spanning stretches (helical) occupy residues 15–35 (GLWF…FGGG), 59–79 (GFIV…LVVG), 84–104 (AGDG…GSFV), 118–138 (VLDQ…VYGW), and 142–162 (GWVL…TNVI).

It belongs to the CDP-archaeol synthase family. Mg(2+) serves as cofactor.

The protein resides in the cell membrane. The enzyme catalyses 2,3-bis-O-(geranylgeranyl)-sn-glycerol 1-phosphate + CTP + H(+) = CDP-2,3-bis-O-(geranylgeranyl)-sn-glycerol + diphosphate. It participates in membrane lipid metabolism; glycerophospholipid metabolism. In terms of biological role, catalyzes the formation of CDP-2,3-bis-(O-geranylgeranyl)-sn-glycerol (CDP-archaeol) from 2,3-bis-(O-geranylgeranyl)-sn-glycerol 1-phosphate (DGGGP) and CTP. This reaction is the third ether-bond-formation step in the biosynthesis of archaeal membrane lipids. The chain is CDP-archaeol synthase from Methanopyrus kandleri (strain AV19 / DSM 6324 / JCM 9639 / NBRC 100938).